The following is a 344-amino-acid chain: 4-hydroxy-3-methylbut-2-en-1-yl diphosphate synthase (flavodoxin) (344 aa).

[4Fe-4S] cluster contacts are provided by C253, C256, C288, and E295.

Belongs to the IspG family. Requires [4Fe-4S] cluster as cofactor.

The enzyme catalyses (2E)-4-hydroxy-3-methylbut-2-enyl diphosphate + oxidized [flavodoxin] + H2O + 2 H(+) = 2-C-methyl-D-erythritol 2,4-cyclic diphosphate + reduced [flavodoxin]. Its pathway is isoprenoid biosynthesis; isopentenyl diphosphate biosynthesis via DXP pathway; isopentenyl diphosphate from 1-deoxy-D-xylulose 5-phosphate: step 5/6. Functionally, converts 2C-methyl-D-erythritol 2,4-cyclodiphosphate (ME-2,4cPP) into 1-hydroxy-2-methyl-2-(E)-butenyl 4-diphosphate. In Thermotoga petrophila (strain ATCC BAA-488 / DSM 13995 / JCM 10881 / RKU-1), this protein is 4-hydroxy-3-methylbut-2-en-1-yl diphosphate synthase (flavodoxin).